Here is a 38-residue protein sequence, read N- to C-terminus: MLNGKANADFVPEMQRFYKLFYHIDLTNEQALKLFQVK.

This is an uncharacterized protein from Haemophilus influenzae (strain ATCC 51907 / DSM 11121 / KW20 / Rd).